A 384-amino-acid chain; its full sequence is Spermidine/putrescine import ATP-binding protein PotA (384 aa).

The ABC transporter domain occupies 6–238; sequence IAFKNVSKVF…PINHFVATFI (233 aa). 40 to 47 lines the ATP pocket; the sequence is GASGSGKS.

Belongs to the ABC transporter superfamily. Spermidine/putrescine importer (TC 3.A.1.11.1) family. As to quaternary structure, the complex is composed of two ATP-binding proteins (PotA), two transmembrane proteins (PotB and PotC) and a solute-binding protein (PotD).

It is found in the cell membrane. The catalysed reaction is ATP + H2O + polyamine-[polyamine-binding protein]Side 1 = ADP + phosphate + polyamineSide 2 + [polyamine-binding protein]Side 1.. Its function is as follows. Part of the ABC transporter complex PotABCD involved in spermidine/putrescine import. Responsible for energy coupling to the transport system. The chain is Spermidine/putrescine import ATP-binding protein PotA from Streptococcus agalactiae serotype Ia (strain ATCC 27591 / A909 / CDC SS700).